The chain runs to 1176 residues: Pesticidal crystal protein Cry1Aa (1176 aa).

The protein belongs to the delta endotoxin family.

In terms of biological role, promotes colloidosmotic lysis by binding to the midgut epithelial cells of many lepidopteran larvae. This chain is Pesticidal crystal protein Cry1Aa (cry1Aa), found in Bacillus thuringiensis subsp. entomocidus.